The primary structure comprises 201 residues: Two-component response regulator ORR10 (201 aa).

Residues 10-142 (HVLAVDDSLP…DMSKLKPHIL (133 aa)) enclose the Response regulatory domain. Aspartate 75 is modified (4-aspartylphosphate). The tract at residues 149–201 (HYQQEQHLQSNSESNNSSNPTSENSSSSTSTNSHKRKAVDEEILPHTIRPRHS) is disordered. Low complexity predominate over residues 158 to 180 (SNSESNNSSNPTSENSSSSTSTN).

The protein belongs to the ARR family. Type-A subfamily. In terms of processing, two-component system major event consists of a His-to-Asp phosphorelay between a sensor histidine kinase (HK) and a response regulator (RR). In plants, the His-to-Asp phosphorelay involves an additional intermediate named Histidine-containing phosphotransfer protein (HPt). This multistep phosphorelay consists of a His-Asp-His-Asp sequential transfer of a phosphate group between first a His and an Asp of the HK protein, followed by the transfer to a conserved His of the HPt protein and finally the transfer to an Asp in the receiver domain of the RR protein. Expressed in mature leaves, and at low levels in roots, shoots and flowers.

Functions as a response regulator involved in His-to-Asp phosphorelay signal transduction system. Phosphorylation of the Asp residue in the receiver domain activates the ability of the protein to promote the transcription of target genes. Type-A response regulators seem to act as negative regulators of the cytokinin signaling. The sequence is that of Two-component response regulator ORR10 from Oryza sativa subsp. indica (Rice).